Consider the following 335-residue polypeptide: tRNA-dihydrouridine(20/20a) synthase (335 aa).

FMN-binding positions include 19-21 (PMM) and Q72. Catalysis depends on C102, which acts as the Proton donor. Residues K141, H173, 213–215 (NGG), and 235–236 (GR) each bind FMN.

It belongs to the Dus family. DusA subfamily. FMN serves as cofactor.

It carries out the reaction 5,6-dihydrouridine(20) in tRNA + NADP(+) = uridine(20) in tRNA + NADPH + H(+). The catalysed reaction is 5,6-dihydrouridine(20) in tRNA + NAD(+) = uridine(20) in tRNA + NADH + H(+). The enzyme catalyses 5,6-dihydrouridine(20a) in tRNA + NADP(+) = uridine(20a) in tRNA + NADPH + H(+). It catalyses the reaction 5,6-dihydrouridine(20a) in tRNA + NAD(+) = uridine(20a) in tRNA + NADH + H(+). Functionally, catalyzes the synthesis of 5,6-dihydrouridine (D), a modified base found in the D-loop of most tRNAs, via the reduction of the C5-C6 double bond in target uridines. Specifically modifies U20 and U20a in tRNAs. In Xanthomonas campestris pv. campestris (strain ATCC 33913 / DSM 3586 / NCPPB 528 / LMG 568 / P 25), this protein is tRNA-dihydrouridine(20/20a) synthase.